Here is a 496-residue protein sequence, read N- to C-terminus: Angiopoietin-2 (496 aa).

Residues 1–18 form the signal peptide; that stretch reads MWQLVFFALSCDLVLAAA. Asparagine 89, asparagine 119, asparagine 133, asparagine 151, asparagine 240, and asparagine 304 each carry an N-linked (GlcNAc...) asparagine glycan. Residues 130–255 adopt a coiled-coil conformation; it reads NLLNQTAEQT…KQQHDLMETV (126 aa). One can recognise a Fibrinogen C-terminal domain in the interval 275–495; that stretch reads KEEQIIFRDC…ATTMMIRPAD (221 aa). Cysteines 284 and 313 form a disulfide. Aspartate 429, aspartate 431, cysteine 433, and cysteine 435 together coordinate Ca(2+). Disulfide bonds link cysteine 433-cysteine 435 and cysteine 437-cysteine 450.

As to quaternary structure, interacts with TEK/TIE2, competing for the same binding site as ANGPT1. Interacts with ITGA5. Interacts with SVEP1/polydom. Interacts with THBD; this interaction significantly inhibits the generation of activated PC and TAFIa/CPB2 by the thrombin/thrombomodulin complex.

It localises to the secreted. Binds to TEK/TIE2, competing for the ANGPT1 binding site, and modulating ANGPT1 signaling. Can induce tyrosine phosphorylation of TEK/TIE2 in the absence of ANGPT1. In the absence of angiogenic inducers, such as VEGF, ANGPT2-mediated loosening of cell-matrix contacts may induce endothelial cell apoptosis with consequent vascular regression. In concert with VEGF, it may facilitate endothelial cell migration and proliferation, thus serving as a permissive angiogenic signal. Involved in the regulation of lymphangiogenesis. In Sus scrofa (Pig), this protein is Angiopoietin-2 (ANGPT2).